A 472-amino-acid chain; its full sequence is L-fuculokinase (472 aa).

Belongs to the FGGY kinase family. The cofactor is a divalent metal cation.

It catalyses the reaction L-fuculose + ATP = L-fuculose 1-phosphate + ADP + H(+). It functions in the pathway carbohydrate degradation; L-fucose degradation; L-lactaldehyde and glycerone phosphate from L-fucose: step 2/3. Catalyzes the phosphorylation of L-fuculose. This Salmonella typhi protein is L-fuculokinase.